The following is a 351-amino-acid chain: Cytoplasmic dynein 2 light intermediate chain 1 (351 aa).

The disordered stretch occupies residues 304-351; sequence TLKDVKDPAKDPQYAESEVDEMRIQKDQELEQYKRSSSKSWKQIELDS. Residues 323-337 show a composition bias toward basic and acidic residues; it reads DEMRIQKDQELEQYK.

The protein belongs to the dynein light intermediate chain family. Light intermediate chain of the cytoplasmic dynein complex 2, a multisubunit complex composed at least of eleven different proteins. The cytoplasmic dynein 2 complex consists of two catalytic heavy chains (HCs) and a number of non-catalytic subunits presented by intermediate chains (ICs), light intermediate chains (LICs) and light chains (LCs). Among them, a heavy chain (DYNC2H1), two intermediate chains (DYNC2I2 and DYNC2I1), a light intermediate chain (DYNC2LI1), and a light chain (DYNLT2B) are unique to the dynein-2 complex, but a subset of light chains are also shared by dynein-1 and dynein-2 complexes. Dynein-2 complex is built around two copies of cytoplasmic dynein 2 heavy chain 1 (DYNC2H1). The C-terminal region forms the motor domain, which converts the energy from ATP hydrolysis into movement. Its N-terminal region forms the tail, an extended structure that binds the other subunits and holds the two heavy chains in a homodimer. Interacts with DYNC2H1 (via N-terminus); this interaction stabilizes the dynein-2 complex structure.

It is found in the cytoplasm. It localises to the cell projection. Its subcellular location is the cilium. The protein localises to the cytoskeleton. The protein resides in the cilium basal body. It is found in the cilium axoneme. It localises to the microtubule organizing center. Its subcellular location is the centrosome. In terms of biological role, acts as one of several non-catalytic accessory components of the cytoplasmic dynein 2 complex (dynein-2 complex), a motor protein complex that drives the movement of cargos along microtubules within cilia and flagella in concert with the intraflagellar transport (IFT) system, facilitating the assembly of these organelles. Involved in the regulation of ciliary length. The chain is Cytoplasmic dynein 2 light intermediate chain 1 (DYNC2LI1) from Bos taurus (Bovine).